Here is a 260-residue protein sequence, read N- to C-terminus: Imidazole glycerol phosphate synthase subunit HisF (260 aa).

Catalysis depends on residues Asp-11 and Asp-130.

It belongs to the HisA/HisF family. Heterodimer of HisH and HisF.

The protein resides in the cytoplasm. The catalysed reaction is 5-[(5-phospho-1-deoxy-D-ribulos-1-ylimino)methylamino]-1-(5-phospho-beta-D-ribosyl)imidazole-4-carboxamide + L-glutamine = D-erythro-1-(imidazol-4-yl)glycerol 3-phosphate + 5-amino-1-(5-phospho-beta-D-ribosyl)imidazole-4-carboxamide + L-glutamate + H(+). It functions in the pathway amino-acid biosynthesis; L-histidine biosynthesis; L-histidine from 5-phospho-alpha-D-ribose 1-diphosphate: step 5/9. In terms of biological role, IGPS catalyzes the conversion of PRFAR and glutamine to IGP, AICAR and glutamate. The HisF subunit catalyzes the cyclization activity that produces IGP and AICAR from PRFAR using the ammonia provided by the HisH subunit. The chain is Imidazole glycerol phosphate synthase subunit HisF from Psychrobacter arcticus (strain DSM 17307 / VKM B-2377 / 273-4).